A 178-amino-acid chain; its full sequence is MQSTKEHRAFLIGRFQPFHLGHLEIVKRILRENDSIIIGIGSAQYSHTTVNPFTAGERHLMISRTLEREHVYNYYLVPIEDVNANSLWVSHVEALAPKFDVVYTNNPLVRRLFTEKHYEVRSLPMVNRSEWTGTKIREKMIKGENWEQNVPEPVVEVIREIDGISRIRQLSTTDEDVP.

The protein belongs to the archaeal NMN adenylyltransferase family.

It is found in the cytoplasm. It catalyses the reaction beta-nicotinamide D-ribonucleotide + ATP + H(+) = diphosphate + NAD(+). It participates in cofactor biosynthesis; NAD(+) biosynthesis; NAD(+) from nicotinamide D-ribonucleotide: step 1/1. This Thermoplasma volcanium (strain ATCC 51530 / DSM 4299 / JCM 9571 / NBRC 15438 / GSS1) protein is Nicotinamide-nucleotide adenylyltransferase.